The following is a 617-amino-acid chain: Dihydroxy-acid dehydratase (617 aa).

Asp81 provides a ligand contact to Mg(2+). Cys122 is a [2Fe-2S] cluster binding site. Residues Asp123 and Lys124 each coordinate Mg(2+). Lys124 is subject to N6-carboxylysine. Cys195 contributes to the [2Fe-2S] cluster binding site. Glu491 lines the Mg(2+) pocket. Ser517 (proton acceptor) is an active-site residue.

It belongs to the IlvD/Edd family. Homodimer. [2Fe-2S] cluster is required as a cofactor. It depends on Mg(2+) as a cofactor.

It carries out the reaction (2R)-2,3-dihydroxy-3-methylbutanoate = 3-methyl-2-oxobutanoate + H2O. The enzyme catalyses (2R,3R)-2,3-dihydroxy-3-methylpentanoate = (S)-3-methyl-2-oxopentanoate + H2O. It functions in the pathway amino-acid biosynthesis; L-isoleucine biosynthesis; L-isoleucine from 2-oxobutanoate: step 3/4. Its pathway is amino-acid biosynthesis; L-valine biosynthesis; L-valine from pyruvate: step 3/4. Its function is as follows. Functions in the biosynthesis of branched-chain amino acids. Catalyzes the dehydration of (2R,3R)-2,3-dihydroxy-3-methylpentanoate (2,3-dihydroxy-3-methylvalerate) into 2-oxo-3-methylpentanoate (2-oxo-3-methylvalerate) and of (2R)-2,3-dihydroxy-3-methylbutanoate (2,3-dihydroxyisovalerate) into 2-oxo-3-methylbutanoate (2-oxoisovalerate), the penultimate precursor to L-isoleucine and L-valine, respectively. This Buchnera aphidicola subsp. Acyrthosiphon pisum (strain 5A) protein is Dihydroxy-acid dehydratase.